Consider the following 356-residue polypeptide: Putative methylthioribose-1-phosphate isomerase (356 aa).

Residues 57–59 (RGA), Arg-100, and Gln-206 contribute to the substrate site. The Proton donor role is filled by Asp-247. A substrate-binding site is contributed by 257-258 (NK).

Belongs to the eIF-2B alpha/beta/delta subunits family. MtnA subfamily.

It carries out the reaction 5-(methylsulfanyl)-alpha-D-ribose 1-phosphate = 5-(methylsulfanyl)-D-ribulose 1-phosphate. In terms of biological role, catalyzes the interconversion of methylthioribose-1-phosphate (MTR-1-P) into methylthioribulose-1-phosphate (MTRu-1-P). In Pyrococcus furiosus (strain ATCC 43587 / DSM 3638 / JCM 8422 / Vc1), this protein is Putative methylthioribose-1-phosphate isomerase.